We begin with the raw amino-acid sequence, 436 residues long: Eukaryotic peptide chain release factor subunit 1 (436 aa).

The protein belongs to the eukaryotic release factor 1 family. Heterodimer of two subunits, one of which binds GTP.

Its subcellular location is the cytoplasm. Functionally, directs the termination of nascent peptide synthesis (translation) in response to the termination codons UAA and UAG. In B.musculus UGA codes for tryptophan. This chain is Eukaryotic peptide chain release factor subunit 1 (eRF1), found in Blepharisma musculus.